Consider the following 545-residue polypeptide: 2-succinyl-5-enolpyruvyl-6-hydroxy-3-cyclohexene-1-carboxylate synthase (545 aa).

Residues 170-185 (QVSGLQRSAPAPSSDS) show a composition bias toward polar residues. Residues 170 to 193 (QVSGLQRSAPAPSSDSPLGAAPQL) form a disordered region.

Belongs to the TPP enzyme family. MenD subfamily. Homodimer. The cofactor is Mg(2+). Mn(2+) is required as a cofactor. Thiamine diphosphate serves as cofactor.

It catalyses the reaction isochorismate + 2-oxoglutarate + H(+) = 5-enolpyruvoyl-6-hydroxy-2-succinyl-cyclohex-3-ene-1-carboxylate + CO2. It participates in quinol/quinone metabolism; 1,4-dihydroxy-2-naphthoate biosynthesis; 1,4-dihydroxy-2-naphthoate from chorismate: step 2/7. The protein operates within cofactor biosynthesis; phylloquinone biosynthesis. Catalyzes the thiamine diphosphate-dependent decarboxylation of 2-oxoglutarate and the subsequent addition of the resulting succinic semialdehyde-thiamine pyrophosphate anion to isochorismate to yield 2-succinyl-5-enolpyruvyl-6-hydroxy-3-cyclohexene-1-carboxylate (SEPHCHC). The sequence is that of 2-succinyl-5-enolpyruvyl-6-hydroxy-3-cyclohexene-1-carboxylate synthase from Parasynechococcus marenigrum (strain WH8102).